Here is a 502-residue protein sequence, read N- to C-terminus: UPF0371 protein CLM_0396 (502 aa).

This sequence belongs to the UPF0371 family.

In Clostridium botulinum (strain Kyoto / Type A2), this protein is UPF0371 protein CLM_0396.